A 1295-amino-acid chain; its full sequence is Phosphoribosylformylglycinamidine synthase (1295 aa).

A disordered region spans residues 305–327; sequence WPGAATGSGGEIRDEGATGRGAK. ATP-binding positions include 307 to 318 and alanine 678; that span reads GAATGSGGEIRD. 3 residues coordinate Mg(2+): glutamate 718, asparagine 722, and aspartate 884. Serine 886 provides a ligand contact to ATP. The region spanning 1042–1295 is the Glutamine amidotransferase type-1 domain; that stretch reads VAVLREQGVN…IFRNARKQLG (254 aa). Cysteine 1135 functions as the Nucleophile in the catalytic mechanism. Residues histidine 1260 and glutamate 1262 contribute to the active site.

The protein in the N-terminal section; belongs to the FGAMS family. Monomer.

It is found in the cytoplasm. The catalysed reaction is N(2)-formyl-N(1)-(5-phospho-beta-D-ribosyl)glycinamide + L-glutamine + ATP + H2O = 2-formamido-N(1)-(5-O-phospho-beta-D-ribosyl)acetamidine + L-glutamate + ADP + phosphate + H(+). It participates in purine metabolism; IMP biosynthesis via de novo pathway; 5-amino-1-(5-phospho-D-ribosyl)imidazole from N(2)-formyl-N(1)-(5-phospho-D-ribosyl)glycinamide: step 1/2. In terms of biological role, phosphoribosylformylglycinamidine synthase involved in the purines biosynthetic pathway. Catalyzes the ATP-dependent conversion of formylglycinamide ribonucleotide (FGAR) and glutamine to yield formylglycinamidine ribonucleotide (FGAM) and glutamate. This is Phosphoribosylformylglycinamidine synthase from Escherichia coli O6:K15:H31 (strain 536 / UPEC).